A 152-amino-acid chain; its full sequence is Protein-export protein SecB (152 aa).

It belongs to the SecB family. Homotetramer, a dimer of dimers. One homotetramer interacts with 1 SecA dimer.

The protein resides in the cytoplasm. Functionally, one of the proteins required for the normal export of preproteins out of the cell cytoplasm. It is a molecular chaperone that binds to a subset of precursor proteins, maintaining them in a translocation-competent state. It also specifically binds to its receptor SecA. This chain is Protein-export protein SecB, found in Rickettsia rickettsii (strain Iowa).